The chain runs to 153 residues: MRPIPALALTFSLVAMPALAQDARQIERMIEGRHGLMTLMAHELGKLGGMAKEETPYDAEVAGKAASNLSALASVISPELFPKGSAVGEAEDSEALPAIWEKPDDFAQKISGMEEAAAKMQAAAGTDLASLQGAMRDLGAACGSCHETYRQKD.

The signal sequence occupies residues Met-1–Ala-20. Pyrrolidone carboxylic acid is present on Gln-21. Heme c contacts are provided by Met-37, Cys-142, Cys-145, and His-146.

Binds 1 heme c group covalently per subunit.

The protein localises to the periplasm. Its function is as follows. Monoheme c-type cytochrome, that is particularly expressed when cells generate energy via aerobic respiration. This is Cytochrome c-554 (cycF) from Cereibacter sphaeroides (strain ATCC 17023 / DSM 158 / JCM 6121 / CCUG 31486 / LMG 2827 / NBRC 12203 / NCIMB 8253 / ATH 2.4.1.) (Rhodobacter sphaeroides).